Consider the following 229-residue polypeptide: Urease accessory protein UreF (229 aa).

Belongs to the UreF family. As to quaternary structure, ureD, UreF and UreG form a complex that acts as a GTP-hydrolysis-dependent molecular chaperone, activating the urease apoprotein by helping to assemble the nickel containing metallocenter of UreC. The UreE protein probably delivers the nickel.

The protein resides in the cytoplasm. In terms of biological role, required for maturation of urease via the functional incorporation of the urease nickel metallocenter. The polypeptide is Urease accessory protein UreF (Trichormus variabilis (strain ATCC 29413 / PCC 7937) (Anabaena variabilis)).